A 420-amino-acid polypeptide reads, in one-letter code: METFDPTELPELLKLYYRRLFPYSQYYRWLNYGGVIKNYFQHREFSFTLKDDIYIRYQSFNNQSDLEKEMQKMNPYKIDIGAVYSHRPNQHNTVKLGAFQAQEKELVFDIDMTDYDDVRRCCSSADICPKCWTLMTMAIRIIDRALKEDFGFKHRLWVYSGRRGVHCWVCDESVRKLSSAVRSGIVEYLSLVKGGQDVKKKVHLSEKIHPFIRKSINIIKKYFEEYALVNQDILENKESWDKILALVPETIHDELQQSFQKSHNSLQRWEHLKKVASRYQNNIKNDKYGPWLEWEIMLQYCFPRLDINVSKGINHLLKSPFSVHPKTGRISVPIDLQKVDQFDPFTVPTISFICRELDAISTNEEEKEENEAESDVKHRTRDYKKTSLAPYVKVFEHFLENLDKSRKGELLKKSDLQKDF.

Position 1 is an N-acetylmethionine (Met-1). Residues Glu-44, Asp-109, and Asp-111 contribute to the active site. Mg(2+)-binding residues include Asp-109 and Asp-111. Asp-109 and Asp-111 together coordinate Mn(2+). 109–111 lines the a ribonucleoside 5'-triphosphate pocket; that stretch reads DID. Zn(2+) contacts are provided by Cys-121, Cys-122, Cys-128, and Cys-131. A Zinc knuckle motif motif is present at residues 121 to 131; that stretch reads CCSSADICPKC. 160–166 lines the a ribonucleoside 5'-triphosphate pocket; that stretch reads SGRRGVH. Asp-306 is a Mg(2+) binding site. Asp-306 lines the Mn(2+) pocket. A ribonucleoside 5'-triphosphate is bound by residues 315–318 and His-324; that span reads HLLK. Positions 363 to 373 are enriched in acidic residues; that stretch reads NEEEKEENEAE. Residues 363–382 form a disordered region; the sequence is NEEEKEENEAESDVKHRTRD.

This sequence belongs to the eukaryotic-type primase small subunit family. In terms of assembly, heterodimer of a catalytic subunit PRIM1 and a regulatory subunit PRIM2, also known as the DNA primase complex. Interacts with PRIM2 (via C-terminus). Component of the alpha DNA polymerase complex (also known as the alpha DNA polymerase-primase complex) consisting of four subunits: the catalytic subunit POLA1, the regulatory subunit POLA2, and the primase complex subunits PRIM1 and PRIM2 respectively. Within the complex, POLA1 directly interacts with PRIM2. Mg(2+) is required as a cofactor. The cofactor is Mn(2+).

It catalyses the reaction ssDNA + n NTP = ssDNA/pppN(pN)n-1 hybrid + (n-1) diphosphate.. Its activity is regulated as follows. The presence of the regulatory subunit PRIM2/p58 accelerates the kinetics of initiation and primer extension. Inhibited by arabinose nucleoside derivatives such as fludarabine and vidarabine. In terms of biological role, catalytic subunit of the DNA primase complex and component of the DNA polymerase alpha complex (also known as the alpha DNA polymerase-primase complex - primosome/replisome) which play an essential role in the initiation of DNA synthesis. During the S phase of the cell cycle, the DNA polymerase alpha complex (composed of a catalytic subunit POLA1, an accessory subunit POLA2 and two primase subunits, the catalytic subunit PRIM1 and the regulatory subunit PRIM2) is recruited to DNA at the replicative forks via direct interactions with MCM10 and WDHD1. The primase subunit of the polymerase alpha complex initiates DNA synthesis by oligomerising short RNA primers on both leading and lagging strands. These primers are initially extended by the polymerase alpha catalytic subunit and subsequently transferred to polymerase delta and polymerase epsilon for processive synthesis on the lagging and leading strand, respectively. In the primase complex, both subunits are necessary for the initial di-nucleotide formation, but the extension of the primer depends only on the catalytic subunit. Synthesizes 9-mer RNA primers (also known as the 'unit length' RNA primers). Incorporates only ribonucleotides in the presence of ribo- and deoxy-nucleotide triphosphates (rNTPs, dNTPs). Requires template thymine or cytidine to start the RNA primer synthesis, with an adenine or guanine at its 5'-end. Binds single stranded DNA. This is DNA primase small subunit (PRIM1) from Homo sapiens (Human).